The sequence spans 128 residues: Glycine cleavage system H protein (128 aa).

Positions 22–104 (TALVGVTDYA…YASGWLVKIK (83 aa)) constitute a Lipoyl-binding domain. At K63 the chain carries N6-lipoyllysine.

Belongs to the GcvH family. In terms of assembly, the glycine cleavage system is composed of four proteins: P, T, L and H. Requires (R)-lipoate as cofactor.

In terms of biological role, the glycine cleavage system catalyzes the degradation of glycine. The H protein shuttles the methylamine group of glycine from the P protein to the T protein. The protein is Glycine cleavage system H protein of Halothermothrix orenii (strain H 168 / OCM 544 / DSM 9562).